We begin with the raw amino-acid sequence, 414 residues long: 2,3-diketo-5-methylthiopentyl-1-phosphate enolase (414 aa).

Catalysis depends on Lys99, which acts as the Proton acceptor. Substrate-binding positions include Lys148, 174–177 (KDDE), His265, Gly338, and 360–361 (GG). Residues Lys174, Asp176, and Glu177 each contribute to the Mg(2+) site. Lys174 bears the N6-carboxylysine mark.

It belongs to the RuBisCO large chain family. Type IV subfamily. In terms of assembly, homodimer. Mg(2+) is required as a cofactor.

The enzyme catalyses 5-methylsulfanyl-2,3-dioxopentyl phosphate = 2-hydroxy-5-methylsulfanyl-3-oxopent-1-enyl phosphate. The protein operates within amino-acid biosynthesis; L-methionine biosynthesis via salvage pathway; L-methionine from S-methyl-5-thio-alpha-D-ribose 1-phosphate: step 3/6. Catalyzes the enolization of 2,3-diketo-5-methylthiopentyl-1-phosphate (DK-MTP-1-P) into 2-hydroxy-3-keto-5-methylthiopentenyl-1-phosphate (HK-MTPenyl-1-P). This is 2,3-diketo-5-methylthiopentyl-1-phosphate enolase from Bacillus cereus (strain ZK / E33L).